The primary structure comprises 463 residues: Asparagine--tRNA ligase (463 aa).

It belongs to the class-II aminoacyl-tRNA synthetase family. Homodimer.

The protein localises to the cytoplasm. It carries out the reaction tRNA(Asn) + L-asparagine + ATP = L-asparaginyl-tRNA(Asn) + AMP + diphosphate + H(+). This Alkaliphilus oremlandii (strain OhILAs) (Clostridium oremlandii (strain OhILAs)) protein is Asparagine--tRNA ligase.